Here is a 396-residue protein sequence, read N- to C-terminus: Phosphoglycerate kinase (396 aa).

Substrate contacts are provided by residues aspartate 21–asparagine 23, arginine 37, histidine 60–arginine 63, arginine 121, and arginine 154. ATP-binding positions include lysine 205, glycine 296, glutamate 327, and glycine 353–serine 356.

Belongs to the phosphoglycerate kinase family. Monomer.

The protein localises to the cytoplasm. It catalyses the reaction (2R)-3-phosphoglycerate + ATP = (2R)-3-phospho-glyceroyl phosphate + ADP. It participates in carbohydrate degradation; glycolysis; pyruvate from D-glyceraldehyde 3-phosphate: step 2/5. This is Phosphoglycerate kinase from Anaeromyxobacter dehalogenans (strain 2CP-1 / ATCC BAA-258).